The chain runs to 464 residues: NADH dehydrogenase [ubiquinone] flavoprotein 1, mitochondrial (464 aa).

A mitochondrion-targeting transit peptide spans M1 to F20. At K81 the chain carries N6-acetyllysine; alternate. K81 is modified (N6-succinyllysine; alternate). Position 87–96 (G87–G96) interacts with NADH. An N6-acetyllysine modification is found at K104. R199–T247 provides a ligand contact to FMN. R257 is modified (omega-N-methylarginine). K375 bears the N6-acetyllysine mark. Residues C379, C382, C385, and C425 each contribute to the [4Fe-4S] cluster site.

Belongs to the complex I 51 kDa subunit family. In terms of assembly, core subunit of respiratory chain NADH dehydrogenase (Complex I) which is composed of 45 different subunits. This is a component of the flavoprotein-sulfur (FP) fragment of the enzyme. Interacts with RAB5IF. It depends on FMN as a cofactor. [4Fe-4S] cluster serves as cofactor.

It is found in the mitochondrion inner membrane. The catalysed reaction is a ubiquinone + NADH + 5 H(+)(in) = a ubiquinol + NAD(+) + 4 H(+)(out). Functionally, core subunit of the mitochondrial membrane respiratory chain NADH dehydrogenase (Complex I) which catalyzes electron transfer from NADH through the respiratory chain, using ubiquinone as an electron acceptor. Part of the peripheral arm of the enzyme, where the electrons from NADH are accepted by flavin mononucleotide (FMN) and then passed along a chain of iron-sulfur clusters by electron tunnelling to the final acceptor ubiquinone. Contains FMN, which is the initial electron acceptor as well as one iron-sulfur cluster. The sequence is that of NADH dehydrogenase [ubiquinone] flavoprotein 1, mitochondrial from Homo sapiens (Human).